The chain runs to 363 residues: Wortmanamides biosynthesis cluster protein C (363 aa).

7 consecutive transmembrane segments (helical) span residues 15 to 35, 48 to 68, 95 to 115, 129 to 149, 175 to 195, 210 to 230, and 237 to 257; these read FVTLLIFTPLGIVVTALRFVA, WLAVIATIFFILTNLAGLMAI, IAGLFFYFAQTLSVKLSILAF, ICIYLLAAAQTILFIAFCIFQ, ILGGELPNSLVDFAMVILAMI, VTVLFGLGFVVGIIGFVKIAV, and LYAFSMIALWTGVQMFTALLC. Positions 293-312 are disordered; the sequence is SSSKNSRKHGPYDSDQSPGP. Asparagine 321 carries N-linked (GlcNAc...) asparagine glycosylation. Residues 344-363 form a disordered region; it reads SPITHPQAYSKQTTRQFDVV.

Belongs to the SAT4 family.

It is found in the membrane. It participates in secondary metabolite biosynthesis. Its function is as follows. Part of the gene cluster that mediates the biosynthesis of wortmanamides A and B, reduced long-chain polyketides amidated with a specific omega-amino acid, 5-aminopentanoic acid (5PA). The PKS modules of TwmB are involved in the synthesis of the polyketide backbone, whereas the non-canonical C domain of TwmB is a bonafide condensation domain that specifically selects 5PA and catalyzes amidation to release polyketide chain. The C domain clearly prefers C16 and C18 fatty acyl substrates, which is consistent with simultaneous formation of both octaketide and nonaketide acyl amides wortmanamides A and B. Because TwmB lacks a designated enoylreductase (ER) domain, the required activity is provided the enoyl reductase TwmE. The roles of the remaining enzymes have still to be clarified. This is Wortmanamides biosynthesis cluster protein C from Talaromyces wortmannii (Penicillium wortmannii).